We begin with the raw amino-acid sequence, 409 residues long: Short chain dehydrogenase sirS (409 aa).

The NADP(+) site is built by valine 49, leucine 68, lysine 195, valine 288, threonine 290, and alanine 299. Residues 306–332 are disordered; it reads GVGPEGAGEEEGKGEAEGGAKGATGWS.

The protein belongs to the short-chain dehydrogenases/reductases (SDR) family. Highly divergent.

Its pathway is mycotoxin biosynthesis. In terms of biological role, short chain dehydrogenase; part of the gene cluster that mediates the biosynthesis of sirodesmin PL, an epipolythiodioxopiperazine (ETP) characterized by a disulfide bridged cyclic dipeptide and that acts as a phytotoxin which is involved in the blackleg didease of canola. SirD catalyzes the O-prenylation of L-tyrosine (L-Tyr) in the presence of dimethylallyl diphosphate (DMAPP) to yield 4-O-dimethylallyl-L-Tyr, and therefore represents probably the first pathway-specific enzyme in the biosynthesis of sirodesmin PL. 4-O-dimethylallyl-L-Tyr, then undergoes condensation with L-Ser in a reaction catalyzed by the non-ribosomal peptide synthase sirP to form the diketopiperazine (DKP) backbone. Further bishydroxylation of the DKP performed by the cytochrome P450 monooxygenase sirC leads to the production of the intermediate phomamide. This step is essential to form the reactive thiol group required for toxicity of sirodesmin PL. The next steps of sirodesmin biosynthesis are not well understood yet, but some predictions could be made from intermediate compounds identification. Phomamide is converted into phomalizarine via oxidation, probably by sirT. Further oxidation, methylation (by sirM or sirN) and reduction steps convert phomalizarine to deacetyl sirodesmin. Finally, acetyltransferase sirH probably acetylates deacetyl sirodesmin to produce sirodesmin PL. The polypeptide is Short chain dehydrogenase sirS (Leptosphaeria maculans (Blackleg fungus)).